A 148-amino-acid chain; its full sequence is Probable DNA-directed RNA polymerases I, II, and III subunit RPABC3 (148 aa).

Residues 16–40 form a non-specific ssDNA binding region; it reads DPDGKKFDRVSRYFCDAESFKMELI.

This sequence belongs to the eukaryotic RPB8 RNA polymerase subunit family. As to quaternary structure, component of the RNA polymerase I (Pol I), RNA polymerase II (Pol II) and RNA polymerase III (Pol III) complexes consisting of at least 13, 12 and 17 subunits, respectively. Directly interacts with POLR2A.

It localises to the nucleus. Functionally, DNA-dependent RNA polymerase catalyzes the transcription of DNA into RNA using the four ribonucleoside triphosphates as substrates. Common component of RNA polymerases I, II and III which synthesize ribosomal RNA precursors, mRNA precursors and many functional non-coding RNAs, and small RNAs, such as 5S rRNA and tRNAs, respectively. The chain is Probable DNA-directed RNA polymerases I, II, and III subunit RPABC3 from Caenorhabditis briggsae.